The sequence spans 882 residues: Pentatricopeptide repeat-containing protein At3g03580 (882 aa).

20 PPR repeats span residues 3–37, 38–68, 70–104, 105–139, 140–170, 171–205, 206–240, 241–271, 272–307, 309–340, 341–371, 372–406, 407–441, 442–472, 473–507, 508–542, 543–573, 574–608, 609–639, and 645–675; these read TRVS…GLDS, SDFF…VSPA, NVYL…KVSP, DKYT…GFES, DLFV…MPVR, DLVS…WIVP, DSFT…GVNS, VVVV…MDVR, DSVS…KPDL, TVSS…GFVL, ESTV…MECK, DTVS…EEQA, DHIT…GICI, DLSV…MGTG, DTVT…EVVP, DMAT…GYES, ELQI…MSRR, DVVT…GIVP, DSVV…MKTH, and MIEH…MPIK. Positions 680 to 755 are type E motif; sequence IWASVLRACR…NPGYSWIEVG (76 aa). Positions 756–786 are type E(+) motif; the sequence is KNVHVFSSGDDSAPQSEAIYKSLEILYSLMA. The tract at residues 787–882 is type DYW motif; it reads KEGYIPDPRE…DGTCSCKDRW (96 aa).

The protein belongs to the PPR family. PCMP-H subfamily.

This is Pentatricopeptide repeat-containing protein At3g03580 (PCMP-H23) from Arabidopsis thaliana (Mouse-ear cress).